The following is a 1209-amino-acid chain: DNA-directed RNA polymerase subunit beta' (1209 aa).

Residues Cys-60, Cys-62, Cys-75, and Cys-78 each contribute to the Zn(2+) site. Residues Asp-450, Asp-452, and Asp-454 each coordinate Mg(2+). Zn(2+) is bound by residues Cys-819, Cys-893, Cys-900, and Cys-903.

This sequence belongs to the RNA polymerase beta' chain family. As to quaternary structure, the RNAP catalytic core consists of 2 alpha, 1 beta, 1 beta' and 1 omega subunit. When a sigma factor is associated with the core the holoenzyme is formed, which can initiate transcription. The cofactor is Mg(2+). Zn(2+) serves as cofactor.

The catalysed reaction is RNA(n) + a ribonucleoside 5'-triphosphate = RNA(n+1) + diphosphate. Functionally, DNA-dependent RNA polymerase catalyzes the transcription of DNA into RNA using the four ribonucleoside triphosphates as substrates. In Streptococcus mutans serotype c (strain ATCC 700610 / UA159), this protein is DNA-directed RNA polymerase subunit beta'.